A 313-amino-acid chain; its full sequence is 4-hydroxy-3-methylbut-2-enyl diphosphate reductase (313 aa).

Residue cysteine 12 coordinates [4Fe-4S] cluster. (2E)-4-hydroxy-3-methylbut-2-enyl diphosphate is bound by residues histidine 41 and histidine 74. Dimethylallyl diphosphate is bound by residues histidine 41 and histidine 74. Residues histidine 41 and histidine 74 each coordinate isopentenyl diphosphate. Cysteine 96 serves as a coordination point for [4Fe-4S] cluster. Histidine 124 contacts (2E)-4-hydroxy-3-methylbut-2-enyl diphosphate. Histidine 124 is a binding site for dimethylallyl diphosphate. Histidine 124 contributes to the isopentenyl diphosphate binding site. Glutamate 126 functions as the Proton donor in the catalytic mechanism. Residue threonine 167 coordinates (2E)-4-hydroxy-3-methylbut-2-enyl diphosphate. Position 197 (cysteine 197) interacts with [4Fe-4S] cluster. The (2E)-4-hydroxy-3-methylbut-2-enyl diphosphate site is built by serine 225, serine 226, asparagine 227, and serine 269. Residues serine 225, serine 226, asparagine 227, and serine 269 each contribute to the dimethylallyl diphosphate site. Isopentenyl diphosphate contacts are provided by serine 225, serine 226, asparagine 227, and serine 269.

This sequence belongs to the IspH family. Homodimer. Requires [4Fe-4S] cluster as cofactor.

The catalysed reaction is isopentenyl diphosphate + 2 oxidized [2Fe-2S]-[ferredoxin] + H2O = (2E)-4-hydroxy-3-methylbut-2-enyl diphosphate + 2 reduced [2Fe-2S]-[ferredoxin] + 2 H(+). It carries out the reaction dimethylallyl diphosphate + 2 oxidized [2Fe-2S]-[ferredoxin] + H2O = (2E)-4-hydroxy-3-methylbut-2-enyl diphosphate + 2 reduced [2Fe-2S]-[ferredoxin] + 2 H(+). The protein operates within isoprenoid biosynthesis; dimethylallyl diphosphate biosynthesis; dimethylallyl diphosphate from (2E)-4-hydroxy-3-methylbutenyl diphosphate: step 1/1. It participates in isoprenoid biosynthesis; isopentenyl diphosphate biosynthesis via DXP pathway; isopentenyl diphosphate from 1-deoxy-D-xylulose 5-phosphate: step 6/6. In terms of biological role, catalyzes the conversion of 1-hydroxy-2-methyl-2-(E)-butenyl 4-diphosphate (HMBPP) into a mixture of isopentenyl diphosphate (IPP) and dimethylallyl diphosphate (DMAPP). Acts in the terminal step of the DOXP/MEP pathway for isoprenoid precursor biosynthesis. The chain is 4-hydroxy-3-methylbut-2-enyl diphosphate reductase from Buchnera aphidicola subsp. Schizaphis graminum (strain Sg).